We begin with the raw amino-acid sequence, 625 residues long: Chaperone protein HtpG (625 aa).

The interval 1–339 (MNKQTLSFQA…SSDLPLNVSR (339 aa)) is a; substrate-binding. Positions 340–557 (ELLQESRDVK…DGDISGHLAR (218 aa)) are b. Positions 558–625 (LLKQAGQSAP…YVQRVNRLLV (68 aa)) are c.

The protein belongs to the heat shock protein 90 family. Homodimer.

It is found in the cytoplasm. In terms of biological role, molecular chaperone. Has ATPase activity. In Methylibium petroleiphilum (strain ATCC BAA-1232 / LMG 22953 / PM1), this protein is Chaperone protein HtpG.